The following is a 144-amino-acid chain: Large ribosomal subunit protein uL15 (144 aa).

The segment at Met-1 to Leu-57 is disordered. Positions Arg-21–Gly-31 are enriched in gly residues.

It belongs to the universal ribosomal protein uL15 family. As to quaternary structure, part of the 50S ribosomal subunit.

Functionally, binds to the 23S rRNA. The protein is Large ribosomal subunit protein uL15 of Pseudomonas entomophila (strain L48).